The sequence spans 94 residues: Signal peptidase complex subunit 1 (94 aa).

Ser2 carries the N-acetylserine modification. Over 2-28 (SEILQDVQRKLVFPIDFPSQRKTEKFQ) the chain is Cytoplasmic. The chain crosses the membrane as a helical span at residues 29-49 (QLSLMIGALVACILGFAQQSL). Position 50 (Lys50) is a topological domain, lumenal. The chain crosses the membrane as a helical span at residues 51–71 (VLLTAYGISCVITLICVLPAY). The Cytoplasmic segment spans residues 72–94 (PWYNKQKLRWAQPKIEINVDQYD).

The protein belongs to the SPCS1 family. As to quaternary structure, component of the signal peptidase complex (SPC) composed of a catalytic subunit SEC11 and three accessory subunits SPC1, SPC2 and SPC3. The complex induces a local thinning of the ER membrane which is used to measure the length of the signal peptide (SP) h-region of protein substrates. This ensures the selectivity of the complex towards h-regions shorter than 18-20 amino acids. SPC associates with the translocon complex. Interacts with SBH1 and SEB2/SBH2.

The protein localises to the endoplasmic reticulum membrane. Component of the signal peptidase complex (SPC) which catalyzes the cleavage of N-terminal signal sequences from nascent proteins as they are translocated into the lumen of the endoplasmic reticulum. Dispensable for SPC enzymatic activity. This Saccharomyces cerevisiae (strain ATCC 204508 / S288c) (Baker's yeast) protein is Signal peptidase complex subunit 1 (SPC1).